Reading from the N-terminus, the 197-residue chain is MKKRRSKKERQELLQQTIESNPFITDEDLAEKFQVSIQTVRLDRMELSIPELRERIKHVATKQHEEDVKSLPLEEVVGEIIDIELDRHAISIFEVKIEHVFKRNQIARGHHLFAQANSLAVAVIDEELALTAKSTIRYIRPVKLGERVVAKARVEDVENDKGRTVVKVRSFVGEELVFTGTFEMYRSSNYSEEGNNL.

This sequence belongs to the FapR family.

In terms of biological role, transcriptional factor involved in regulation of membrane lipid biosynthesis by repressing genes involved in fatty acid and phospholipid metabolism. In Bacillus cereus (strain B4264), this protein is Transcription factor FapR.